Reading from the N-terminus, the 316-residue chain is FAD:protein FMN transferase (316 aa).

Residues M14, A88–N90, and D146 contribute to the FAD site. A149 contacts Mg(2+). Residues K152 and L231 each contribute to the FAD site. 2 residues coordinate Mg(2+): D257 and T261.

The protein belongs to the ApbE family. Requires Mg(2+) as cofactor.

The protein localises to the cytoplasm. It catalyses the reaction L-threonyl-[protein] + FAD = FMN-L-threonyl-[protein] + AMP + H(+). In terms of biological role, flavin transferase that catalyzes the transfer of the FMN moiety of FAD and its covalent binding to the hydroxyl group of a threonine residue in a target flavoprotein. Is responsible for the modification of the fumarate reductase KPK_2907. The polypeptide is FAD:protein FMN transferase (Klebsiella pneumoniae (strain 342)).